A 36-amino-acid chain; its full sequence is Mu-agatoxin-Aa1a (36 aa).

Intrachain disulfides connect cysteine 2/cysteine 17, cysteine 9/cysteine 22, cysteine 16/cysteine 32, and cysteine 24/cysteine 30. Asparagine 36 bears the Asparagine amide mark.

This sequence belongs to the neurotoxin 07 (Beta/delta-agtx) family. 04 (aga-5) subfamily. In terms of tissue distribution, expressed by the venom gland.

It is found in the secreted. Insecticidal neurotoxin that induces an irreversible spastic paralysis when injected into insects. Modifies presynaptic voltage-gated sodium channels (Nav), causing them to open at the normal resting potential of the nerve. This leads to spontaneous release of neurotransmitter and repetitive action potentials in motor neurons. This chain is Mu-agatoxin-Aa1a, found in Agelenopsis aperta (North American funnel-web spider).